The sequence spans 222 residues: Ribosomal RNA large subunit methyltransferase E (222 aa).

Residues 1-13 (MSRSDKNPHERLK) show a composition bias toward basic and acidic residues. Positions 1–22 (MSRSDKNPHERLKTAKKRTASS) are disordered. The S-adenosyl-L-methionine site is built by G75, W77, D94, D110, and D134. Residue K174 is the Proton acceptor of the active site.

It belongs to the class I-like SAM-binding methyltransferase superfamily. RNA methyltransferase RlmE family.

It localises to the cytoplasm. It carries out the reaction uridine(2552) in 23S rRNA + S-adenosyl-L-methionine = 2'-O-methyluridine(2552) in 23S rRNA + S-adenosyl-L-homocysteine + H(+). Functionally, specifically methylates the uridine in position 2552 of 23S rRNA at the 2'-O position of the ribose in the fully assembled 50S ribosomal subunit. The protein is Ribosomal RNA large subunit methyltransferase E of Novosphingobium aromaticivorans (strain ATCC 700278 / DSM 12444 / CCUG 56034 / CIP 105152 / NBRC 16084 / F199).